The chain runs to 258 residues: Flap endonuclease Xni (258 aa).

Mg(2+) is bound at residue aspartate 109. Residues 165–254 enclose the 5'-3' exonuclease domain; that stretch reads VKPEQLPDYW…GFNLQDIRYL (90 aa). K(+)-binding residues include leucine 176, alanine 177, proline 185, isoleucine 187, and isoleucine 190. An interaction with DNA region spans residues 189–194; it reads GIGPKA.

It belongs to the Xni family. It depends on Mg(2+) as a cofactor. Requires K(+) as cofactor.

Its function is as follows. Has flap endonuclease activity. During DNA replication, flap endonucleases cleave the 5'-overhanging flap structure that is generated by displacement synthesis when DNA polymerase encounters the 5'-end of a downstream Okazaki fragment. This Photobacterium profundum (strain SS9) protein is Flap endonuclease Xni.